We begin with the raw amino-acid sequence, 141 residues long: MYACSKFVSTRSLIRSTSQLLSRPLSAVELKRPQMPTDEGLSCLAVRRPLTSLIPSRSFQTSAISRDIDTAAKFIGAGAATVGVAGSGAGIGTVFGSLIIGYARNPSLKQQLFSYAILGFALSEAMGLFCLMVAFLILFAM.

A mitochondrion-targeting transit peptide spans 1–66 (MYACSKFVST…RSFQTSAISR (66 aa)). Residues 82-102 (VGVAGSGAGIGTVFGSLIIGY) traverse the membrane as a helical segment. K109 carries the post-translational modification N6,N6,N6-trimethyllysine. A helical transmembrane segment spans residues 117–137 (ILGFALSEAMGLFCLMVAFLI).

This sequence belongs to the ATPase C chain family. F-type ATPases have 2 components, CF(1) - the catalytic core - and CF(0) - the membrane proton channel. CF(1) has five subunits: alpha(3), beta(3), gamma(1), delta(1), epsilon(1). CF(0) has three main subunits: a, b and c. Interacts with DNAJC30; interaction is direct. In terms of processing, trimethylated by ATPSCKMT at Lys-109. Methylation is required for proper incorporation of the C subunit into the ATP synthase complex and mitochondrial respiration.

Its subcellular location is the mitochondrion membrane. In terms of biological role, mitochondrial membrane ATP synthase (F(1)F(0) ATP synthase or Complex V) produces ATP from ADP in the presence of a proton gradient across the membrane which is generated by electron transport complexes of the respiratory chain. F-type ATPases consist of two structural domains, F(1) - containing the extramembraneous catalytic core and F(0) - containing the membrane proton channel, linked together by a central stalk and a peripheral stalk. During catalysis, ATP synthesis in the catalytic domain of F(1) is coupled via a rotary mechanism of the central stalk subunits to proton translocation. Part of the complex F(0) domain. A homomeric c-ring of probably 10 subunits is part of the complex rotary element. This Rattus norvegicus (Rat) protein is ATP synthase F(0) complex subunit C2, mitochondrial.